The following is a 506-amino-acid chain: (+)-piperitol/(+)-sesamin synthase CYP81Q2 (506 aa).

A helical membrane pass occupies residues Ala-3–Leu-23. Cys-439 contributes to the heme binding site.

The protein belongs to the cytochrome P450 family. The cofactor is heme. In terms of tissue distribution, expressed in seeds.

The protein localises to the membrane. The enzyme catalyses (+)-piperitol + reduced [NADPH--hemoprotein reductase] + O2 = (+)-sesamin + oxidized [NADPH--hemoprotein reductase] + 2 H2O + H(+). It carries out the reaction (+)-pinoresinol + reduced [NADPH--hemoprotein reductase] + O2 = (+)-piperitol + oxidized [NADPH--hemoprotein reductase] + 2 H2O + H(+). Involved in the biosynthesis of (+)-sesamin, a furofuran class lignan. Functions in a dual catalytic mode. Catalyzes the synthesis of (+)-sesamin from (+)- pinoresinol by formation of two successive methylenedioxy bridges on (+)-pinoresinol and (+)-piperitol, respectively. This chain is (+)-piperitol/(+)-sesamin synthase CYP81Q2, found in Sesamum radiatum (Black benniseed).